Reading from the N-terminus, the 492-residue chain is Cytochrome P450 26A1 (492 aa).

A heme-binding site is contributed by Cys-437.

It belongs to the cytochrome P450 family. Heme is required as a cofactor. Expressed primarily in ovary, brain and eyes.

The protein resides in the endoplasmic reticulum membrane. It localises to the microsome membrane. The enzyme catalyses all-trans-retinoate + reduced [NADPH--hemoprotein reductase] + O2 = all-trans-(4S)-hydroxyretinoate + oxidized [NADPH--hemoprotein reductase] + H2O + H(+). Functionally, a cytochrome P450 monooxygenase involved in the metabolism of all-trans retinoic acid (atRA), a signaling molecule that binds to retinoic acid receptors and regulates gene transcription. May regulate at-RA signaling during hindbrain development. Mechanistically, uses molecular oxygen inserting one oxygen atom into a substrate, and reducing the second into a water molecule, with two electrons provided by NADPH via cytochrome P450 reductase (CPR; NADPH-ferrihemoprotein reductase). Catalyzes the hydroxylation of carbon hydrogen bonds of atRA primarily at C-4. Has no activity toward 9-cis and 13-cis retinoic acid stereoisomers. May play a role in the oxidative metabolism of xenobiotics such as tazarotenic acid. This is Cytochrome P450 26A1 (cyp26a1) from Xenopus laevis (African clawed frog).